The following is a 308-amino-acid chain: Mu-like prophage FluMu major head subunit (308 aa).

The protein to phage Mu protein T.

This is Mu-like prophage FluMu major head subunit from Haemophilus influenzae (strain ATCC 51907 / DSM 11121 / KW20 / Rd).